Consider the following 150-residue polypeptide: Small ribosomal subunit protein uS13 (150 aa).

Residues 131–150 (QRTKSTFRRGPTVGVSRRKK) are disordered.

This sequence belongs to the universal ribosomal protein uS13 family. Part of the 30S ribosomal subunit. Forms a loose heterodimer with protein S19. Forms two bridges to the 50S subunit in the 70S ribosome.

Located at the top of the head of the 30S subunit, it contacts several helices of the 16S rRNA. In the 70S ribosome it contacts the 23S rRNA (bridge B1a) and protein L5 of the 50S subunit (bridge B1b), connecting the 2 subunits; these bridges are implicated in subunit movement. This is Small ribosomal subunit protein uS13 from Methanocaldococcus jannaschii (strain ATCC 43067 / DSM 2661 / JAL-1 / JCM 10045 / NBRC 100440) (Methanococcus jannaschii).